Reading from the N-terminus, the 529-residue chain is Berberine bridge enzyme-like 7 (529 aa).

A signal peptide spans 1–19; that stretch reads MKEALSILCLALLVSVSEA. Cysteines 32 and 95 form a disulfide. N52 is a glycosylation site (N-linked (GlcNAc...) asparagine). Residues 69 to 247 form the FAD-binding PCMH-type domain; sequence YSSPNFKKLL…LSWKINLVKV (179 aa). The segment at residues 110-172 is a cross-link (6-(S-cysteinyl)-8alpha-(pros-histidyl)-FAD (His-Cys)); the sequence is HDLEGLSYRS…QTLAFPAGVC (63 aa). N-linked (GlcNAc...) asparagine glycans are attached at residues N257, N341, and N439.

It belongs to the oxygen-dependent FAD-linked oxidoreductase family. It depends on FAD as a cofactor. In terms of processing, the FAD cofactor is bound via a bicovalent 6-S-cysteinyl, 8alpha-N1-histidyl FAD linkage.

The protein resides in the secreted. Its subcellular location is the cell wall. Probable flavin-dependent oxidoreductase. This chain is Berberine bridge enzyme-like 7, found in Arabidopsis thaliana (Mouse-ear cress).